The following is a 316-amino-acid chain: Initiation factor TFIIB homolog (316 aa).

Belongs to the asfivirus C315R family.

Its function is as follows. Putative initation factor. The protein is Initiation factor TFIIB homolog of Ornithodoros (relapsing fever ticks).